The following is an 898-amino-acid chain: Transportin-1 (898 aa).

The residue at position 1 (methionine 1) is an N-acetylmethionine. HEAT repeat units follow at residues 19–46 (GLQQ…QKLE), 51–89 (YPDF…AHFQ), 98–131 (FIKS…KGEL), 137–174 (LLPK…LDSD), 181–211 (NIMI…QFII), 224–251 (FIEN…VMLL), 263–290 (HNIV…FWLT), 306–397 (PKLI…LANV), 405–433 (HILP…GAIA), 445–472 (PELI…TLSR), 486–519 (LKPL…EEEA), 527–560 (LAYI…ADSV), 568–606 (EYIQ…TALQ), 614–665 (EPVY…GLGG), 676–707 (ILTL…KACF), 715–748 (ADFM…IQMG), 756–791 (PMVL…YVCP), 799–832 (QQFI…ISVN), 841–872 (IFFC…KNQV), and 875–895 (ENWR…LAAF). Residues 41–109 (VQQKLEQLNQ…KSECLNNIGD (69 aa)) form the Importin N-terminal domain. A disordered region spans residues 347–374 (FHRSRTVAQQHDEDGIEEEDDDDDEIDD). The segment covering 360–374 (DGIEEEDDDDDEIDD) has biased composition (acidic residues).

It belongs to the importin beta family. Importin beta-2 subfamily. In terms of assembly, identified in a complex that contains TNPO1, RAN and RANBP1. Binds HNRPA1, HNRPA2, HNRNPDL, RPS7, RPL5 and RAN. Interacts with H2A, H2B, H3 and H4 histones. Interacts with isoform 1 and isoform 5 of ADAR/ADAR1 (via DRBM 3 domain). Interacts with SNAI1 (via zinc fingers); the interaction mediates SNAI1 nuclear import. Interacts with SNAI2 (via zinc fingers). Interacts with RPL23A (via BIB domain) and SRP19; this interaction is involved in RPL23A and SRP19 import into the nucleus. Interacts (via HEAT repeats 8-12) with BAP1 (via non-classical PY-NLS); this interaction is direct, is involved in BAP1 nuclear import and disrupts BAP1 homodimerization. (Microbial infection) Binds to HIV-1 Rev.

It localises to the cytoplasm. Its subcellular location is the nucleus. Its function is as follows. Functions in nuclear protein import as nuclear transport receptor. Serves as receptor for nuclear localization signals (NLS) in cargo substrates. May mediate docking of the importin/substrate complex to the nuclear pore complex (NPC) through binding to nucleoporin and the complex is subsequently translocated through the pore by an energy requiring, Ran-dependent mechanism. At the nucleoplasmic side of the NPC, Ran binds to the importin, the importin/substrate complex dissociates and importin is re-exported from the nucleus to the cytoplasm where GTP hydrolysis releases Ran. The directionality of nuclear import is thought to be conferred by an asymmetric distribution of the GTP- and GDP-bound forms of Ran between the cytoplasm and nucleus. Involved in nuclear import of M9-containing proteins. In vitro, binds directly to the M9 region of the heterogeneous nuclear ribonucleoproteins (hnRNP), A1 and A2 and mediates their nuclear import. Involved in hnRNP A1/A2 nuclear export. Mediates the nuclear import of ribosomal proteins RPL23A, RPS7 and RPL5. In vitro, mediates nuclear import of H2A, H2B, H3 and H4 histones. In vitro, mediates nuclear import of SRP19. Mediates nuclear import of ADAR/ADAR1 isoform 1 and isoform 5 in a RanGTP-dependent manner. Main mediator of PR-DUB complex component BAP1 nuclear import; acts redundantly with the karyopherins KPNA1 and KPNA2. In terms of biological role, (Microbial infection) In case of HIV-1 infection, binds and mediates the nuclear import of HIV-1 Rev. The polypeptide is Transportin-1 (TNPO1) (Homo sapiens (Human)).